We begin with the raw amino-acid sequence, 360 residues long: Phospho-N-acetylmuramoyl-pentapeptide-transferase (360 aa).

A run of 10 helical transmembrane segments spans residues 25–45 (RGILGVLTALTLSLCLGPWMI), 73–93 (TMGGALILSSIGISTLLWADL), 97–117 (YVWVVLLVTLLFGAIGWVDDY), 135–155 (FWQSVFGLCAAIFLYTTAPSA), 170–190 (IPLGIGFIVLTYFVIVGSSNA), 199–219 (GLAIMPTVMVGGALGIFCYLS), 236–256 (AGELIVFSGALIGAGLGFLWF), 263–283 (VFMGDVGALALGAALGTMAVI), 288–308 (IVLFIMGGVFVMETLSVVIQV), and 338–358 (VIVRFWIITVILVLIGLATLK).

It belongs to the glycosyltransferase 4 family. MraY subfamily. It depends on Mg(2+) as a cofactor.

The protein localises to the cell inner membrane. The catalysed reaction is UDP-N-acetyl-alpha-D-muramoyl-L-alanyl-gamma-D-glutamyl-meso-2,6-diaminopimeloyl-D-alanyl-D-alanine + di-trans,octa-cis-undecaprenyl phosphate = di-trans,octa-cis-undecaprenyl diphospho-N-acetyl-alpha-D-muramoyl-L-alanyl-D-glutamyl-meso-2,6-diaminopimeloyl-D-alanyl-D-alanine + UMP. It participates in cell wall biogenesis; peptidoglycan biosynthesis. In terms of biological role, catalyzes the initial step of the lipid cycle reactions in the biosynthesis of the cell wall peptidoglycan: transfers peptidoglycan precursor phospho-MurNAc-pentapeptide from UDP-MurNAc-pentapeptide onto the lipid carrier undecaprenyl phosphate, yielding undecaprenyl-pyrophosphoryl-MurNAc-pentapeptide, known as lipid I. The protein is Phospho-N-acetylmuramoyl-pentapeptide-transferase of Pseudomonas savastanoi pv. phaseolicola (strain 1448A / Race 6) (Pseudomonas syringae pv. phaseolicola (strain 1448A / Race 6)).